Here is a 68-residue protein sequence, read N- to C-terminus: DNA-directed RNA polymerase subunit omega (68 aa).

Belongs to the RNA polymerase subunit omega family. As to quaternary structure, the RNAP catalytic core consists of 2 alpha, 1 beta, 1 beta' and 1 omega subunit. When a sigma factor is associated with the core the holoenzyme is formed, which can initiate transcription.

The enzyme catalyses RNA(n) + a ribonucleoside 5'-triphosphate = RNA(n+1) + diphosphate. Functionally, promotes RNA polymerase assembly. Latches the N- and C-terminal regions of the beta' subunit thereby facilitating its interaction with the beta and alpha subunits. The protein is DNA-directed RNA polymerase subunit omega of Desulfatibacillum aliphaticivorans.